The sequence spans 475 residues: Ribulose bisphosphate carboxylase large chain (475 aa).

The propeptide occupies 1-2 (MS). Pro-3 bears the N-acetylproline mark. At Lys-14 the chain carries N6,N6,N6-trimethyllysine. Positions 123 and 173 each coordinate substrate. Catalysis depends on Lys-175, which acts as the Proton acceptor. Substrate is bound at residue Lys-177. Mg(2+)-binding residues include Lys-201, Asp-203, and Glu-204. Lys-201 carries the N6-carboxylysine modification. The active-site Proton acceptor is the His-294. Residues Arg-295, His-327, and Ser-379 each contribute to the substrate site.

This sequence belongs to the RuBisCO large chain family. Type I subfamily. In terms of assembly, heterohexadecamer of 8 large chains and 8 small chains; disulfide-linked. The disulfide link is formed within the large subunit homodimers. It depends on Mg(2+) as a cofactor. The disulfide bond which can form in the large chain dimeric partners within the hexadecamer appears to be associated with oxidative stress and protein turnover.

The protein localises to the plastid. It is found in the chloroplast. The catalysed reaction is 2 (2R)-3-phosphoglycerate + 2 H(+) = D-ribulose 1,5-bisphosphate + CO2 + H2O. It catalyses the reaction D-ribulose 1,5-bisphosphate + O2 = 2-phosphoglycolate + (2R)-3-phosphoglycerate + 2 H(+). In terms of biological role, ruBisCO catalyzes two reactions: the carboxylation of D-ribulose 1,5-bisphosphate, the primary event in carbon dioxide fixation, as well as the oxidative fragmentation of the pentose substrate in the photorespiration process. Both reactions occur simultaneously and in competition at the same active site. The sequence is that of Ribulose bisphosphate carboxylase large chain from Equisetum arvense (Field horsetail).